The following is a 108-amino-acid chain: Peptidyl-prolyl cis-trans isomerase FKBP1A (108 aa).

One can recognise a PPIase FKBP-type domain in the interval 20 to 108 (GQTVVVHYVG…TFDVELLRLE (89 aa)).

This sequence belongs to the FKBP-type PPIase family. FKBP1 subfamily.

It is found in the cytoplasm. It carries out the reaction [protein]-peptidylproline (omega=180) = [protein]-peptidylproline (omega=0). Inhibited by both FK506 and rapamycin. In terms of biological role, keeps in an inactive conformation TGFBR1, the TGF-beta type I serine/threonine kinase receptor, preventing TGF-beta receptor activation in absence of ligand. May modulate the RYR1 calcium channel activity. PPIases accelerate the folding of proteins. It catalyzes the cis-trans isomerization of proline imidic peptide bonds in oligopeptides. The chain is Peptidyl-prolyl cis-trans isomerase FKBP1A (fkbp1a) from Xenopus laevis (African clawed frog).